The primary structure comprises 156 residues: Cellulose synthase operon protein D (156 aa).

It functions in the pathway glycan metabolism; bacterial cellulose biosynthesis. In terms of biological role, may have a major role in the perfection of crystallization, involved either in the pore structure itself or in the organization of the pores within the linear array of terminal synthesizing complexes (TCs). In Komagataeibacter xylinus (Gluconacetobacter xylinus), this protein is Cellulose synthase operon protein D (bcsDI).